We begin with the raw amino-acid sequence, 1113 residues long: Protein MGA2 (1113 aa).

The interval 91–114 (TPLEEEMESNRALKEEEEDEHENK) is disordered. S255 carries the phosphoserine modification. Composition is skewed to polar residues over residues 344 to 357 (DTTK…SSRR) and 437 to 452 (HIPS…SESF). Disordered regions lie at residues 344-376 (DTTK…NNQL) and 437-462 (HIPS…NDNP). Position 467 is a phosphoserine (S467). An IPT/TIG domain is found at 530–610 (PSINRVIPSQ…NENNNDDLPQ (81 aa)). A disordered region spans residues 658 to 687 (IVGNDSPDSGTNGNSCSKSTGPSPNQHSMN). Positions 663–687 (SPDSGTNGNSCSKSTGPSPNQHSMN) are enriched in polar residues. ANK repeat units follow at residues 719–748 (LGRT…RVND) and 752–781 (FGLT…NYSL). The helical transmembrane segment at 1037–1054 (MLIFFWIPLTLLLLTWFI) threads the bilayer.

The protein localises to the membrane. This chain is Protein MGA2 (MGA2), found in Saccharomyces cerevisiae (strain ATCC 204508 / S288c) (Baker's yeast).